Reading from the N-terminus, the 590-residue chain is Putative laccase-19 (590 aa).

The N-terminal stretch at Met-1–Ala-28 is a signal peptide. 2 Plastocyanin-like domains span residues Val-36–Gly-152 and Lys-161–Ala-315. Residues Asn-41 and Asn-47 are each glycosylated (N-linked (GlcNAc...) asparagine). Cu cation contacts are provided by His-86 and His-88. The N-linked (GlcNAc...) asparagine glycan is linked to Asn-120. Cu cation-binding residues include His-131 and His-133. N-linked (GlcNAc...) asparagine glycosylation is found at Asn-205, Asn-344, Asn-378, Asn-397, Asn-434, and Asn-465. A Plastocyanin-like 3 domain is found at Asp-424–Pro-566. 8 residues coordinate Cu cation: Asn-483, His-486, His-488, His-545, Cys-546, His-547, His-551, and Met-556. The tract at residues Gly-565–Pro-590 is disordered.

This sequence belongs to the multicopper oxidase family. The cofactor is Cu cation.

Its subcellular location is the secreted. The protein localises to the extracellular space. It is found in the apoplast. The enzyme catalyses 4 hydroquinone + O2 = 4 benzosemiquinone + 2 H2O. Functionally, lignin degradation and detoxification of lignin-derived products. The protein is Putative laccase-19 (LAC19) of Oryza sativa subsp. indica (Rice).